The chain runs to 1250 residues: SRC kinase signaling inhibitor 1 (1250 aa).

The span at 19-45 (AEGRARSPREEVGPRDPGGRGEPDPER) shows a compositional bias: basic and acidic residues. Residues 19–78 (AEGRARSPREEVGPRDPGGRGEPDPERSSPPMLSADDAEYPREYRTLGGGGGGGSGGRRF) are disordered. A phosphoserine mark is found at S47 and S52. Residues 65-75 (LGGGGGGGSGG) show a composition bias toward gly residues. S79 bears the Phosphoserine mark. The residue at position 86 (T86) is a Phosphothreonine. 7 positions are modified to phosphoserine: S87, S98, S211, S233, S237, S247, and S293. The residue at position 309 (Y309) is a Phosphotyrosine. Positions 352–448 (ASRESSPTRR…RRDVKPDEDL (97 aa)) are disordered. A compositionally biased stretch (polar residues) spans 354 to 364 (RESSPTRRLNN). Over residues 365–374 (LSPASHLASS) the composition is skewed to low complexity. Residues S366, S375, and S392 each carry the phosphoserine modification. Residues 381 to 399 (PSGLPSGLPSGSPSRSRLS) show a composition bias toward low complexity. Omega-N-methylarginine is present on residues R397 and R404. Phosphoserine is present on residues S411, S430, and S432. Over residues 437 to 448 (LERRDVKPDEDL) the composition is skewed to basic and acidic residues. The residue at position 464 (Y464) is a Phosphotyrosine. A disordered region spans residues 538 to 710 (PSSPQKLADV…ASSTPAGQPT (173 aa)). The segment covering 552-563 (GGPPPPHSPYSG) has biased composition (pro residues). Phosphoserine occurs at positions 559, 562, and 566. R567 bears the Omega-N-methylarginine mark. 5 positions are modified to phosphoserine: S569, S579, S581, S583, and S588. Residues 590 to 607 (GGKARSTGSASTAGAPPS) are compositionally biased toward low complexity. Positions 628–640 (KDTETRERMEAME) are enriched in basic and acidic residues. 2 positions are modified to phosphoserine: S664 and S688. 2 positions are modified to phosphothreonine: T691 and T704. The segment covering 701 to 710 (ASSTPAGQPT) has biased composition (low complexity). 2 coiled-coil regions span residues 712 to 753 (VSRL…RALL) and 793 to 813 (EELI…IQRD). The tract at residues 714-764 (RLQMQLHLRGLQNSASDLRGQLQQLRNVQLQNQESVRALLKPTEADVSMRV) is interaction with SNAP25. Phosphoserine occurs at positions 911 and 933. Disordered regions lie at residues 924 to 982 (GLDF…ERDW) and 1016 to 1094 (DCAS…TGEV). T951 carries the phosphothreonine modification. S1054 is subject to Phosphoserine. Over residues 1069 to 1078 (KSPPPPPPRR) the composition is skewed to pro residues. Phosphoserine is present on residues S1110 and S1127. The interval 1155–1250 (ELESGGSSVP…FGARNSSISF (96 aa)) is disordered. The span at 1217-1250 (PNETSSPGSEKPSGSRTSIPVLTSFGARNSSISF) shows a compositional bias: polar residues.

Belongs to the SRCIN1 family. As to quaternary structure, interacts with the N-terminal coiled-coil region of SNAP25. Interacts with BCAR1/p130Cas and SRC through its C-terminal domain. Interacts with CSK, CTTN, SORBS3/vinexin, SYP and MAPRE3/EB3. Tyrosine-phosphorylated in response to EGF and to cell adhesion to integrin ligands. In terms of tissue distribution, expressed predominantly in central nervous system with high levels detected in cortex, cerebellum, midbrain and spinal cord (at protein level). Also expressed in testis and epithelial-rich tissues such as mammary gland, lung and kidney.

The protein localises to the cytoplasm. Its subcellular location is the cytoskeleton. It localises to the cell projection. It is found in the axon. The protein resides in the dendrite. The protein localises to the presynapse. Its subcellular location is the postsynapse. It localises to the postsynaptic density. Acts as a negative regulator of SRC by activating CSK which inhibits SRC activity and downstream signaling, leading to impaired cell spreading and migration. Regulates dendritic spine morphology. Involved in calcium-dependent exocytosis. May play a role in neurotransmitter release or synapse maintenance. This is SRC kinase signaling inhibitor 1 (Srcin1) from Mus musculus (Mouse).